We begin with the raw amino-acid sequence, 250 residues long: MENTIVIKLGGVASDNLTEGFFRQITEWQAANKKIVLVHGGGHYITKMMEALAIPVETKNGLRITNKAALEVTKMVLIGQVQPAITTAFQKRNISVIGLNAGDTGLLEADRLSDTDLGLVGKITKVKTNLIEQLLSENIITVIAPLGINSEHDWLNVNADTAACEVASALHAEALYLLTDVPGVKNGSEIINEIATAEIEKLQKTGVIKGGMIPKLASAAFAAENGVDQVIITNSLETIGTKIKSKVAIG.

Substrate is bound by residues 41-42, Arg-63, and Asn-156; that span reads GG.

Belongs to the acetylglutamate kinase family. ArgB subfamily.

It localises to the cytoplasm. It carries out the reaction N-acetyl-L-glutamate + ATP = N-acetyl-L-glutamyl 5-phosphate + ADP. Its pathway is amino-acid biosynthesis; L-arginine biosynthesis; N(2)-acetyl-L-ornithine from L-glutamate: step 2/4. Its function is as follows. Catalyzes the ATP-dependent phosphorylation of N-acetyl-L-glutamate. This chain is Acetylglutamate kinase, found in Listeria monocytogenes serotype 4a (strain HCC23).